Reading from the N-terminus, the 780-residue chain is ATP-dependent 6-phosphofructokinase, liver type (780 aa).

Ala-2 carries the N-acetylalanine modification. Residues 2–390 (ASVDLEKLRT…NWNIYKLLSH (389 aa)) are N-terminal catalytic PFK domain 1. Residues Gly-25, 88 to 89 (RC), and 118 to 121 (GDGS) each bind ATP. Residue Asp-119 participates in Mg(2+) binding. Substrate-binding positions include 164–166 (SID), Arg-201, 208–210 (MGR), Glu-264, Arg-292, and 298–301 (HVQR). Catalysis depends on Asp-166, which acts as the Proton acceptor. Residue Ser-377 is modified to Phosphoserine. The segment at 391 to 400 (QKISKEKTNF) is interdomain linker. The segment at 401-780 (SLAILNVGAP…RRTLSIETGF (380 aa)) is C-terminal regulatory PFK domain 2. Beta-D-fructose 2,6-bisphosphate contacts are provided by residues Arg-470, 527 to 531 (TISNN), Arg-565, 572 to 574 (MGG), and Glu-628. O-linked (GlcNAc) serine glycosylation is present at Ser-529. Residue Tyr-640 is modified to Phosphotyrosine. Residues Arg-654, 660-663 (HLQQ), and Arg-734 each bind beta-D-fructose 2,6-bisphosphate. The residue at position 775 (Ser-775) is a Phosphoserine.

The protein belongs to the phosphofructokinase type A (PFKA) family. ATP-dependent PFK group I subfamily. Eukaryotic two domain clade 'E' sub-subfamily. In terms of assembly, homo- and heterotetramers. Phosphofructokinase (PFK) enzyme functions as a tetramer composed of different combinations of 3 types of subunits, called PFKM (M), PFKL (L) and PFKP (P). The composition of the PFK tetramer differs according to the tissue type it is present in. The kinetic and regulatory properties of the tetrameric enzyme are dependent on the subunit composition, hence can vary across tissues. Mg(2+) is required as a cofactor. GlcNAcylation at Ser-529 by OGT decreases enzyme activity, leading to redirect glucose flux through the oxidative pentose phosphate pathway. Glycosylation is stimulated by both hypoxia and glucose deprivation.

It localises to the cytoplasm. The catalysed reaction is beta-D-fructose 6-phosphate + ATP = beta-D-fructose 1,6-bisphosphate + ADP + H(+). It functions in the pathway carbohydrate degradation; glycolysis; D-glyceraldehyde 3-phosphate and glycerone phosphate from D-glucose: step 3/4. With respect to regulation, allosterically activated by ADP, AMP, or fructose 2,6-bisphosphate, and allosterically inhibited by ATP or citrate. GlcNAcylation by OGT overcomes allosteric regulation. Catalyzes the phosphorylation of D-fructose 6-phosphate to fructose 1,6-bisphosphate by ATP, the first committing step of glycolysis. Negatively regulates the phagocyte oxidative burst in response to bacterial infection by controlling cellular NADPH biosynthesis and NADPH oxidase-derived reactive oxygen species. Upon macrophage activation, drives the metabolic switch toward glycolysis, thus preventing glucose turnover that produces NADPH via pentose phosphate pathway. The polypeptide is ATP-dependent 6-phosphofructokinase, liver type (PFKL) (Bos taurus (Bovine)).